Here is a 370-residue protein sequence, read N- to C-terminus: Pyruvate dehydrogenase E1 component subunit alpha (370 aa).

Heterodimer of an alpha and a beta chain. The cofactor is thiamine diphosphate.

It carries out the reaction N(6)-[(R)-lipoyl]-L-lysyl-[protein] + pyruvate + H(+) = N(6)-[(R)-S(8)-acetyldihydrolipoyl]-L-lysyl-[protein] + CO2. The pyruvate dehydrogenase complex catalyzes the overall conversion of pyruvate to acetyl-CoA and CO(2). It contains multiple copies of three enzymatic components: pyruvate dehydrogenase (E1), dihydrolipoamide acetyltransferase (E2) and lipoamide dehydrogenase (E3). The chain is Pyruvate dehydrogenase E1 component subunit alpha (pdhA) from Staphylococcus aureus (strain MRSA252).